The chain runs to 630 residues: ATP-dependent zinc metalloprotease FtsH (630 aa).

At 1-7 (MNNFMKN) the chain is on the cytoplasmic side. A helical transmembrane segment spans residues 8 to 28 (IGFYLVLIALSILVAQFFVDT). The Periplasmic segment spans residues 29-111 (DVNTIVDTDV…KTEPEPTAPW (83 aa)). A helical transmembrane segment spans residues 112–132 (WTGMLAYILPIILLIGAWFFI). Over 133-630 (MQRMQGGGSQ…ENREHENNDK (498 aa)) the chain is Cytoplasmic. Residue 203–210 (GPPGTGKT) participates in ATP binding. His425 lines the Zn(2+) pocket. The active site involves Glu426. Zn(2+) contacts are provided by His429 and Asp501. A disordered region spans residues 601–630 (KLIKGEPLDDDSIDNSTDENENREHENNDK). The segment covering 608–619 (LDDDSIDNSTDE) has biased composition (acidic residues). Residues 620–630 (NENREHENNDK) show a composition bias toward basic and acidic residues.

The protein in the central section; belongs to the AAA ATPase family. In the C-terminal section; belongs to the peptidase M41 family. As to quaternary structure, homohexamer. Zn(2+) serves as cofactor.

The protein resides in the cell inner membrane. Acts as a processive, ATP-dependent zinc metallopeptidase for both cytoplasmic and membrane proteins. Plays a role in the quality control of integral membrane proteins. The sequence is that of ATP-dependent zinc metalloprotease FtsH from Halothermothrix orenii (strain H 168 / OCM 544 / DSM 9562).